A 252-amino-acid polypeptide reads, in one-letter code: MIKKRVIPCLDVKDGRVVKGIQFQSLRDIGNPVDLALYYNEAGADELVFLDISKTEAGHDLMIEVIEATAKQLFIPLTVGGGIQNLDDITQLLNHGADKISLNSSALKHPELIRQASEKFGRQCICIAIDSFYDKDREDYFCTTHGGKKLTDVSVYDWVQEVEHLGAGELLITSMHHDGMKQGFDIEHLAKIKQLVNIPIIASGGGGNAQHFVELFQQTDVSAGLAASILHDQETTVAEIKDKMREGGILVR.

Active-site residues include Asp-11 and Asp-130.

Belongs to the HisA/HisF family. Heterodimer of HisH and HisF.

The protein resides in the cytoplasm. The enzyme catalyses 5-[(5-phospho-1-deoxy-D-ribulos-1-ylimino)methylamino]-1-(5-phospho-beta-D-ribosyl)imidazole-4-carboxamide + L-glutamine = D-erythro-1-(imidazol-4-yl)glycerol 3-phosphate + 5-amino-1-(5-phospho-beta-D-ribosyl)imidazole-4-carboxamide + L-glutamate + H(+). It functions in the pathway amino-acid biosynthesis; L-histidine biosynthesis; L-histidine from 5-phospho-alpha-D-ribose 1-diphosphate: step 5/9. Functionally, IGPS catalyzes the conversion of PRFAR and glutamine to IGP, AICAR and glutamate. The HisF subunit catalyzes the cyclization activity that produces IGP and AICAR from PRFAR using the ammonia provided by the HisH subunit. In Staphylococcus epidermidis (strain ATCC 35984 / DSM 28319 / BCRC 17069 / CCUG 31568 / BM 3577 / RP62A), this protein is Imidazole glycerol phosphate synthase subunit HisF.